We begin with the raw amino-acid sequence, 331 residues long: L-lactate dehydrogenase A chain (331 aa).

NAD(+) contacts are provided by residues 29–57 (GMVG…MEDK) and Arg98. Positions 105, 137, and 168 each coordinate substrate. Residue Asn137 coordinates NAD(+). His192 functions as the Proton acceptor in the catalytic mechanism. Position 247 (Thr247) interacts with substrate.

The protein belongs to the LDH/MDH superfamily. LDH family. Homotetramer.

It is found in the cytoplasm. It carries out the reaction (S)-lactate + NAD(+) = pyruvate + NADH + H(+). The protein operates within fermentation; pyruvate fermentation to lactate; (S)-lactate from pyruvate: step 1/1. Interconverts simultaneously and stereospecifically pyruvate and lactate with concomitant interconversion of NADH and NAD(+). The sequence is that of L-lactate dehydrogenase A chain (ldha) from Paranotothenia magellanica (Maori cod).